We begin with the raw amino-acid sequence, 571 residues long: Proline--tRNA ligase (571 aa).

It belongs to the class-II aminoacyl-tRNA synthetase family. ProS type 1 subfamily. As to quaternary structure, homodimer.

It localises to the cytoplasm. The catalysed reaction is tRNA(Pro) + L-proline + ATP = L-prolyl-tRNA(Pro) + AMP + diphosphate. Catalyzes the attachment of proline to tRNA(Pro) in a two-step reaction: proline is first activated by ATP to form Pro-AMP and then transferred to the acceptor end of tRNA(Pro). As ProRS can inadvertently accommodate and process non-cognate amino acids such as alanine and cysteine, to avoid such errors it has two additional distinct editing activities against alanine. One activity is designated as 'pretransfer' editing and involves the tRNA(Pro)-independent hydrolysis of activated Ala-AMP. The other activity is designated 'posttransfer' editing and involves deacylation of mischarged Ala-tRNA(Pro). The misacylated Cys-tRNA(Pro) is not edited by ProRS. The polypeptide is Proline--tRNA ligase (Shewanella putrefaciens (strain CN-32 / ATCC BAA-453)).